The chain runs to 278 residues: Large ribosomal subunit protein uL2 (278 aa).

Disordered regions lie at residues M1–D20 and V225–R278. A compositionally biased stretch (basic residues) spans R258–R278.

It belongs to the universal ribosomal protein uL2 family. Part of the 50S ribosomal subunit. Forms a bridge to the 30S subunit in the 70S ribosome.

Functionally, one of the primary rRNA binding proteins. Required for association of the 30S and 50S subunits to form the 70S ribosome, for tRNA binding and peptide bond formation. It has been suggested to have peptidyltransferase activity; this is somewhat controversial. Makes several contacts with the 16S rRNA in the 70S ribosome. The chain is Large ribosomal subunit protein uL2 from Cutibacterium acnes (strain DSM 16379 / KPA171202) (Propionibacterium acnes).